The sequence spans 251 residues: Triosephosphate isomerase (251 aa).

9 to 11 contributes to the substrate binding site; the sequence is NWK. The Electrophile role is filled by histidine 95. Glutamate 167 serves as the catalytic Proton acceptor. Substrate is bound by residues glycine 173, serine 213, and 234 to 235; that span reads GG.

Belongs to the triosephosphate isomerase family. In terms of assembly, homodimer.

It localises to the cytoplasm. The enzyme catalyses D-glyceraldehyde 3-phosphate = dihydroxyacetone phosphate. It functions in the pathway carbohydrate biosynthesis; gluconeogenesis. The protein operates within carbohydrate degradation; glycolysis; D-glyceraldehyde 3-phosphate from glycerone phosphate: step 1/1. Functionally, involved in the gluconeogenesis. Catalyzes stereospecifically the conversion of dihydroxyacetone phosphate (DHAP) to D-glyceraldehyde-3-phosphate (G3P). The chain is Triosephosphate isomerase from Lactobacillus gasseri (strain ATCC 33323 / DSM 20243 / BCRC 14619 / CIP 102991 / JCM 1131 / KCTC 3163 / NCIMB 11718 / NCTC 13722 / AM63).